The primary structure comprises 362 residues: E3 ubiquitin-protein ligase TM129 (362 aa).

Topologically, residues 1-6 (MDSPEV) are lumenal. Residues 7–27 (TFTLAYLVFAVCFVFTPTEFH) form a helical membrane-spanning segment. Residues 28–56 (SAGLTVQNLLSGWLGSEDAAFVPYHLRRT) are Cytoplasmic-facing. The chain crosses the membrane as a helical span at residues 57-77 (AATLLCHSLLPLGYYVGMCFA). The Lumenal segment spans residues 78-94 (ASEKQLYYPSQTPETWR). A helical membrane pass occupies residues 95 to 115 (AFLLLALMLPAIACTLIYYWS). The Cytoplasmic portion of the chain corresponds to 116 to 362 (RDHWACHPLA…FCVLDVCAVR (247 aa)). The segment at 285–350 (CIGCMQTQAS…ASRVPCPTCR (66 aa)) adopts an RING-type; degenerate zinc-finger fold.

Belongs to the TMEM129 family. In terms of assembly, integral component of ER-resident dislocation complexes.

The protein resides in the endoplasmic reticulum membrane. It carries out the reaction S-ubiquitinyl-[E2 ubiquitin-conjugating enzyme]-L-cysteine + [acceptor protein]-L-lysine = [E2 ubiquitin-conjugating enzyme]-L-cysteine + N(6)-ubiquitinyl-[acceptor protein]-L-lysine.. It participates in protein modification; protein ubiquitination. Functionally, E3 ubiquitin-protein ligase involved in ER-associated protein degradation, preferentially associates with the E2 enzyme UBE2J2. Exploited by viral US11 proteins to mediate HLA class I proteins degradation. The polypeptide is E3 ubiquitin-protein ligase TM129 (TMEM129) (Bos taurus (Bovine)).